A 446-amino-acid chain; its full sequence is Argininosuccinate synthase (446 aa).

Residues 17–25 (AFSGGLDTS) and A43 contribute to the ATP site. Y99 provides a ligand contact to L-citrulline. ATP-binding residues include G129 and T131. 3 residues coordinate L-aspartate: T131, N135, and D136. N135 provides a ligand contact to L-citrulline. D136 lines the ATP pocket. L-citrulline is bound by residues R139 and S192. D194 contacts ATP. Residues T201, E203, and E280 each contribute to the L-citrulline site.

It belongs to the argininosuccinate synthase family. Type 2 subfamily. As to quaternary structure, homotetramer.

It localises to the cytoplasm. It catalyses the reaction L-citrulline + L-aspartate + ATP = 2-(N(omega)-L-arginino)succinate + AMP + diphosphate + H(+). It participates in amino-acid biosynthesis; L-arginine biosynthesis; L-arginine from L-ornithine and carbamoyl phosphate: step 2/3. The protein is Argininosuccinate synthase of Polaromonas sp. (strain JS666 / ATCC BAA-500).